A 361-amino-acid polypeptide reads, in one-letter code: Epoxyqueuosine reductase (361 aa).

Catalysis depends on aspartate 147, which acts as the Proton donor. The 30-residue stretch at 193–222 (VDPAMDSEHCGRCSACLDICPTAAFVGPYR) folds into the 4Fe-4S ferredoxin-type domain. The [4Fe-4S] cluster site is built by cysteine 202, cysteine 205, cysteine 208, cysteine 212, cysteine 228, cysteine 255, cysteine 258, and cysteine 262.

It belongs to the QueG family. Monomer. The cofactor is cob(II)alamin. Requires [4Fe-4S] cluster as cofactor.

Its subcellular location is the cytoplasm. The catalysed reaction is epoxyqueuosine(34) in tRNA + AH2 = queuosine(34) in tRNA + A + H2O. It participates in tRNA modification; tRNA-queuosine biosynthesis. Functionally, catalyzes the conversion of epoxyqueuosine (oQ) to queuosine (Q), which is a hypermodified base found in the wobble positions of tRNA(Asp), tRNA(Asn), tRNA(His) and tRNA(Tyr). The sequence is that of Epoxyqueuosine reductase from Pseudomonas aeruginosa (strain ATCC 15692 / DSM 22644 / CIP 104116 / JCM 14847 / LMG 12228 / 1C / PRS 101 / PAO1).